The primary structure comprises 425 residues: Histone-binding protein RBBP4-A (425 aa).

The residue at position 2 (Ala-2) is an N-acetylalanine. WD repeat units lie at residues 32 to 125 (YDLV…THDG), 126 to 175 (EVNR…RLRG), 176 to 223 (HQKE…KTIF), 225 to 270 (GHTA…HSVD), 271 to 314 (AHTA…HSFE), 315 to 371 (SHKD…FIHG), and 372 to 404 (GHTA…VWQM).

Belongs to the WD repeat RBAP46/RBAP48/MSI1 family. In terms of assembly, binds directly to histone H4, probably via helix 1 of the histone fold, a region that is not accessible when histone H4 is in chromatin. Probably forms a large corepressor complex that contains ncor1, sin3a, hdac1-A and/or hdac1-B, hdac2, rbbp4-A and/or rbbp4-B and possibly rbbp7.

The protein resides in the nucleus. Its subcellular location is the chromosome. The protein localises to the telomere. Functionally, core histone-binding subunit that may target chromatin assembly factors, chromatin remodeling factors and histone deacetylases to their histone substrates in a manner that is regulated by nucleosomal DNA. Component of several complexes which regulate chromatin metabolism. The protein is Histone-binding protein RBBP4-A (rbbp4-a) of Xenopus laevis (African clawed frog).